A 346-amino-acid chain; its full sequence is 4-hydroxy-2-oxovalerate aldolase 2 (346 aa).

In terms of domain architecture, Pyruvate carboxyltransferase spans 8–258 (VTLVDTTLRD…HTGVELFPLI (251 aa)). Residues 16-17 (RD), serine 170, and histidine 197 each bind substrate. Position 17 (aspartate 17) interacts with Mn(2+). Positions 197 and 199 each coordinate Mn(2+). Tyrosine 288 contacts substrate.

It belongs to the 4-hydroxy-2-oxovalerate aldolase family.

The enzyme catalyses (S)-4-hydroxy-2-oxopentanoate = acetaldehyde + pyruvate. This is 4-hydroxy-2-oxovalerate aldolase 2 from Nocardia farcinica (strain IFM 10152).